A 125-amino-acid chain; its full sequence is Small ribosomal subunit protein uS12 (125 aa).

Asp-89 carries the post-translational modification 3-methylthioaspartic acid. A disordered region spans residues 106–125; it reads GVKDRKQSRSKYGAKRPKKA. Over residues 113–125 the composition is skewed to basic residues; it reads SRSKYGAKRPKKA.

Belongs to the universal ribosomal protein uS12 family. As to quaternary structure, part of the 30S ribosomal subunit. Contacts proteins S8 and S17. May interact with IF1 in the 30S initiation complex.

Functionally, with S4 and S5 plays an important role in translational accuracy. In terms of biological role, interacts with and stabilizes bases of the 16S rRNA that are involved in tRNA selection in the A site and with the mRNA backbone. Located at the interface of the 30S and 50S subunits, it traverses the body of the 30S subunit contacting proteins on the other side and probably holding the rRNA structure together. The combined cluster of proteins S8, S12 and S17 appears to hold together the shoulder and platform of the 30S subunit. This chain is Small ribosomal subunit protein uS12, found in Variovorax paradoxus (strain S110).